We begin with the raw amino-acid sequence, 67 residues long: Large ribosomal subunit protein uL29 (67 aa).

Belongs to the universal ribosomal protein uL29 family.

This Sulfurihydrogenibium sp. (strain YO3AOP1) protein is Large ribosomal subunit protein uL29.